A 621-amino-acid chain; its full sequence is Type 2 DNA topoisomerase 6 subunit B (621 aa).

ATP contacts are provided by residues asparagine 48, aspartate 80, 101–102, 111–118, and lysine 435; these read SR and GQQGIGIS.

Belongs to the TOP6B family. In terms of assembly, homodimer. Heterotetramer of two Top6A and two Top6B chains.

It catalyses the reaction ATP-dependent breakage, passage and rejoining of double-stranded DNA.. Its function is as follows. Relaxes both positive and negative superturns and exhibits a strong decatenase activity. This Methanosarcina mazei (strain ATCC BAA-159 / DSM 3647 / Goe1 / Go1 / JCM 11833 / OCM 88) (Methanosarcina frisia) protein is Type 2 DNA topoisomerase 6 subunit B.